Reading from the N-terminus, the 498-residue chain is ATP synthase subunit beta, chloroplastic (498 aa).

172-179 (GGAGVGKT) is a binding site for ATP.

It belongs to the ATPase alpha/beta chains family. As to quaternary structure, F-type ATPases have 2 components, CF(1) - the catalytic core - and CF(0) - the membrane proton channel. CF(1) has five subunits: alpha(3), beta(3), gamma(1), delta(1), epsilon(1). CF(0) has four main subunits: a(1), b(1), b'(1) and c(9-12).

It is found in the plastid. The protein localises to the chloroplast thylakoid membrane. It carries out the reaction ATP + H2O + 4 H(+)(in) = ADP + phosphate + 5 H(+)(out). Functionally, produces ATP from ADP in the presence of a proton gradient across the membrane. The catalytic sites are hosted primarily by the beta subunits. The polypeptide is ATP synthase subunit beta, chloroplastic (Castanea sativa (Sweet chestnut)).